Consider the following 376-residue polypeptide: UDP-N-acetylglucosamine 2-epimerase (376 aa).

Residues arginine 10, lysine 15, aspartate 95, glutamate 117, histidine 213, glutamine 271, phenylalanine 276, 290 to 292 (SGG), glutamate 296, and arginine 313 each bind substrate.

Belongs to the UDP-N-acetylglucosamine 2-epimerase family. In terms of assembly, homodimer.

The protein resides in the cytoplasm. The enzyme catalyses UDP-N-acetyl-alpha-D-glucosamine = UDP-N-acetyl-alpha-D-mannosamine. It functions in the pathway bacterial outer membrane biogenesis; enterobacterial common antigen biosynthesis. Its function is as follows. Catalyzes the reversible epimerization at C-2 of UDP-N-acetylglucosamine (UDP-GlcNAc) and thereby provides bacteria with UDP-N-acetylmannosamine (UDP-ManNAc), the activated donor of ManNAc residues. This Salmonella typhimurium (strain LT2 / SGSC1412 / ATCC 700720) protein is UDP-N-acetylglucosamine 2-epimerase.